Reading from the N-terminus, the 379-residue chain is Alcohol dehydrogenase 1 (379 aa).

Residues Cys47, Thr49, His69, Cys99, Cys102, Cys105, Cys113, and Cys177 each coordinate Zn(2+). An alcohol is bound by residues Thr49 and His69. Thr49 lines the NAD(+) pocket. Residues Gly202–Gly207, Asp226, Arg231, Thr272, Val295, Val295–Val297, Phe322, and Arg372 contribute to the NAD(+) site.

The protein belongs to the zinc-containing alcohol dehydrogenase family. In terms of assembly, homodimer. Zn(2+) serves as cofactor.

The protein localises to the cytoplasm. It carries out the reaction a primary alcohol + NAD(+) = an aldehyde + NADH + H(+). The enzyme catalyses a secondary alcohol + NAD(+) = a ketone + NADH + H(+). This Oryza sativa subsp. indica (Rice) protein is Alcohol dehydrogenase 1 (ADH1).